We begin with the raw amino-acid sequence, 176 residues long: Lipocalin-1 (176 aa).

Positions 1–19 (MMRALLLAIGLGLVAALQA) are cleaved as a signal peptide. Cys-80 and Cys-171 are joined by a disulfide.

It belongs to the calycin superfamily. Lipocalin family. As to quaternary structure, predominantly monomer. May form homodimer. Interacts with LMBR1L; this interaction mediates the endocytosis of LCN1.

The protein localises to the secreted. Functionally, could play a role in taste reception. Could be necessary for the concentration and delivery of sapid molecules in the gustatory system. Can bind various ligands, with chemical structures ranging from lipids and retinoids to the macrocyclic antibiotic rifampicin and even to microbial siderophores. Exhibits an extremely wide ligand pocket. In Sus scrofa (Pig), this protein is Lipocalin-1 (LCN1).